A 152-amino-acid polypeptide reads, in one-letter code: Nucleoside diphosphate kinase (152 aa).

ATP-binding residues include lysine 11, phenylalanine 59, arginine 87, threonine 93, arginine 104, and asparagine 114. Histidine 117 (pros-phosphohistidine intermediate) is an active-site residue.

The protein belongs to the NDK family. Homotetramer. It depends on Mg(2+) as a cofactor.

It is found in the cytoplasm. The catalysed reaction is dZDP + ATP = dZTP + ADP. The enzyme catalyses a 2'-deoxyribonucleoside 5'-diphosphate + ATP = a 2'-deoxyribonucleoside 5'-triphosphate + ADP. It carries out the reaction a ribonucleoside 5'-diphosphate + ATP = a ribonucleoside 5'-triphosphate + ADP. Its pathway is purine metabolism. In terms of biological role, major role in the synthesis of nucleoside triphosphates other than ATP. The ATP gamma phosphate is transferred to the NDP beta phosphate via a ping-pong mechanism, using a phosphorylated active-site intermediate. (Microbial infection) Catalyzes the phosphorylation of dZDP to dZTP, when the bacterium is infected by a phage that produces the substrate for the synthesis of dZTP (2- amino-2'-deoxyadenosine 5'-triphosphate), which is then used by the phage as a DNA polymerase substrate. This Synechococcus sp. (strain WH7803) protein is Nucleoside diphosphate kinase.